The primary structure comprises 938 residues: Protein O-mannosyl-transferase Tmtc2 (938 aa).

A topological domain (cytoplasmic) is located at residue methionine 1. The helical transmembrane segment at 2-22 (PSLEPWLWGDSCSWLGMLAML) threads the bilayer. At 23-34 (RLRLHKSNMDFT) the chain is on the extracellular side. A helical transmembrane segment spans residues 35–55 (CLFCCSLAFVLYLNTLGAGFV). Residues 56-108 (YDDRRAILANADVSGGTPWQRSFSNDFWGTPLTDSGSHGSWRPLCVLSFRLNY) are Cytoplasmic-facing. The helical transmembrane segment at 109–129 (LIGGGFAPWGFHLVNNLLHCV) threads the bilayer. Over 130 to 139 (ATALVVRVAR) the chain is Extracellular. The helical transmembrane segment at 140 to 160 (TLLASVWAVLAAGALFAAHPI) threads the bilayer. Topologically, residues 161–164 (HTEA) are cytoplasmic. Residues 165-185 (VAGVVGRADLAACVCYLLTYL) form a helical membrane-spanning segment. Residues 186 to 208 (SYLRHMRWRESGDPRQWLALGAT) are Extracellular-facing. Residues 209-229 (LILAAAGLLCKETAITALLVC) form a helical membrane-spanning segment. The Cytoplasmic portion of the chain corresponds to 230 to 249 (ALFDVMRGLSGQVDKQRLRS). The chain crosses the membrane as a helical span at residues 250-270 (VCIVLGALFCMAYCRLVIVPG). Over 271–291 (PQTAFSSADNPIARTPSAWTR) the chain is Extracellular. Residues 292–312 (LLTFLYLPVFNLRLLLQPNVL) form a helical membrane-spanning segment. Over 313 to 510 (SFDWGMDALP…HACVLIMSLS (198 aa)) the chain is Cytoplasmic. The tract at residues 450–480 (RSSSSCSNSTNSSSSSSSSSSSSSSSSSSLS) is disordered. The chain crosses the membrane as a helical span at residues 511 to 531 (FLALPFLPASNLLFYVGFVVA). Topologically, residues 532–533 (ER) are extracellular. A helical transmembrane segment spans residues 534-554 (LLYLPSVGFCLLVGYGVSKLM). Over 555 to 562 (SCNQRTRN) the chain is Cytoplasmic. A helical transmembrane segment spans residues 563–580 (ILLLSFSLLLAAMSLRTL). Residues 581–938 (RRNADWRDEE…NLAKLGVTNV (358 aa)) lie on the Extracellular side of the membrane. TPR repeat units lie at residues 602–635 (PKALGNLGSVLSSQGRYEEAKQVLQEAIRFRPNM), 636–669 (ADVHFNLGILHQNQQVYPAAVECFQRAIKFRPNL), 670–703 (AVAYLNLGISFIALGKRQQAIEILQAGSNLDGAA), 715–748 (SSAYLQLGALYVEQGKLQRALAIYREALSSLPGL), 753–786 (EILYQRIGDVLGRLQQWDEAERHHRAALELQPNQ), 788–821 (AAHLSYGITLARNSSRASEAEMWFKRALKLAPEQ), 822–855 (ASVYHHYAEFLSLQSRHHESAIYHRRAAELAPND), 856–889 (YTLVVAAATAMRLLDRKVDAEMWYRKAVALRPGD), and 890–923 (AHAHTNLGAILHLLGRTNHAAASYKAALRLQPGD). Asparagine 800 is a glycosylation site (N-linked (GlcNAc...) asparagine).

It belongs to the TMTC family.

It is found in the membrane. It localises to the endoplasmic reticulum. It catalyses the reaction a di-trans,poly-cis-dolichyl beta-D-mannosyl phosphate + L-seryl-[protein] = 3-O-(alpha-D-mannosyl)-L-seryl-[protein] + a di-trans,poly-cis-dolichyl phosphate + H(+). The catalysed reaction is a di-trans,poly-cis-dolichyl beta-D-mannosyl phosphate + L-threonyl-[protein] = 3-O-(alpha-D-mannosyl)-L-threonyl-[protein] + a di-trans,poly-cis-dolichyl phosphate + H(+). It participates in protein modification; protein glycosylation. Transfers mannosyl residues to the hydroxyl group of serine or threonine residues. This is Protein O-mannosyl-transferase Tmtc2 from Drosophila melanogaster (Fruit fly).